The chain runs to 384 residues: 8-amino-7-oxononanoate synthase (384 aa).

Arg-21 serves as a coordination point for substrate. Residue 108-109 (GF) coordinates pyridoxal 5'-phosphate. Position 133 (His-133) interacts with substrate. Pyridoxal 5'-phosphate-binding residues include Ser-179, His-207, and Thr-233. Lys-236 bears the N6-(pyridoxal phosphate)lysine mark. Thr-352 contributes to the substrate binding site.

The protein belongs to the class-II pyridoxal-phosphate-dependent aminotransferase family. BioF subfamily. In terms of assembly, homodimer. Pyridoxal 5'-phosphate is required as a cofactor.

The catalysed reaction is 6-carboxyhexanoyl-[ACP] + L-alanine + H(+) = (8S)-8-amino-7-oxononanoate + holo-[ACP] + CO2. It participates in cofactor biosynthesis; biotin biosynthesis. Catalyzes the decarboxylative condensation of pimeloyl-[acyl-carrier protein] and L-alanine to produce 8-amino-7-oxononanoate (AON), [acyl-carrier protein], and carbon dioxide. In Escherichia coli O9:H4 (strain HS), this protein is 8-amino-7-oxononanoate synthase.